The chain runs to 157 residues: MFDILMYLFENYVHSEVELLVDEDELTKELTRAGFHQSEIIKALSWLERLADLQEAGTPYLCNHDQQSFRIYTKAEMEKIDVESRGFLLFLEQIKVLSVEIREMVIDRVMEIDEPTLNLDDIKWVILMVLFNAPGHESAYEQMEDLIFEQPDGRLHS.

Belongs to the Smg family.

This chain is Protein Smg homolog, found in Shewanella pealeana (strain ATCC 700345 / ANG-SQ1).